The following is a 189-amino-acid chain: Endoribonuclease YbeY (189 aa).

Residues His-146, His-150, and His-156 each contribute to the Zn(2+) site.

Belongs to the endoribonuclease YbeY family. Zn(2+) serves as cofactor.

It is found in the cytoplasm. Functionally, single strand-specific metallo-endoribonuclease involved in late-stage 70S ribosome quality control and in maturation of the 3' terminus of the 16S rRNA. The chain is Endoribonuclease YbeY from Prochlorococcus marinus (strain MIT 9211).